The following is a 464-amino-acid chain: ATP synthase subunit beta (464 aa).

152-159 (GGAGVGKT) contributes to the ATP binding site.

It belongs to the ATPase alpha/beta chains family. F-type ATPases have 2 components, CF(1) - the catalytic core - and CF(0) - the membrane proton channel. CF(1) has five subunits: alpha(3), beta(3), gamma(1), delta(1), epsilon(1). CF(0) has three main subunits: a(1), b(2) and c(9-12). The alpha and beta chains form an alternating ring which encloses part of the gamma chain. CF(1) is attached to CF(0) by a central stalk formed by the gamma and epsilon chains, while a peripheral stalk is formed by the delta and b chains.

It is found in the cell membrane. The catalysed reaction is ATP + H2O + 4 H(+)(in) = ADP + phosphate + 5 H(+)(out). Produces ATP from ADP in the presence of a proton gradient across the membrane. The catalytic sites are hosted primarily by the beta subunits. This is ATP synthase subunit beta from Ureaplasma urealyticum serovar 10 (strain ATCC 33699 / Western).